The chain runs to 115 residues: MARAAATQLVLVAMVAAMLLVATDAAISCGQVSSALSPCISYARGNGAKPPVACCSGVKRLAGAAQSTADKQAACKCIKSAAGGLNAGKAAGIPSMCGVSVPYAISASVDCSKIR.

The first 25 residues, 1–25 (MARAAATQLVLVAMVAAMLLVATDA), serve as a signal peptide directing secretion. Intrachain disulfides connect C29-C77, C39-C54, C55-C97, and C75-C111.

It belongs to the plant LTP family.

Plant non-specific lipid-transfer proteins transfer phospholipids as well as galactolipids across membranes. May play a role in wax or cutin deposition in the cell walls of expanding epidermal cells and certain secretory tissues. In Hordeum vulgare (Barley), this protein is Non-specific lipid-transfer protein 4.3 (LTP4.3).